The primary structure comprises 372 residues: Ephrin type-A receptor 8 (372 aa).

The Protein kinase domain maps to 2-263 (IHIEKIIGSG…HVVSVLEALV (262 aa)). ATP-binding positions include 8–16 (IGSGESGEV) and Lys34. The Proton acceptor role is filled by Asp127. Phosphotyrosine; by autocatalysis is present on Tyr206. The 76-residue stretch at 297–372 (NGDLTVGDWL…SCTQGPRRHL (76 aa)) folds into the SAM domain. Positions 370–372 (RHL) match the PDZ-binding motif.

Heterotetramer upon binding of the ligand. The heterotetramer is composed of an ephrin dimer and a receptor dimer. Oligomerization is probably required to induce biological responses. May also form heterodimers with other ephrin receptors. Interacts with FYN; possible downstream effector of EPHA8 in regulation of cell adhesion. Interacts with PIK3CG; regulates integrin-mediated cell adhesion to substrate. Interacts with TIAM1; regulates clathrin-mediated endocytosis of EPHA8. Interacts with ANKS1A and ANKS1B; EPHA8 kinase activity-independent but stimulated by EPHA8 ubiquitination. In terms of processing, phosphorylated. Phosphorylation is stimulated upon binding of its ligands including EFNA2, EFNA3 and EFNA5. Autophosphorylation on Tyr-206 modulates tyrosine kinase activity. Ubiquitinated. Ubiquitination by CBL regulates the receptor stability and activity through proteasomal degradation. ANKS1A prevents ubiquitination and degradation. Most abundant in brain.

The protein localises to the cell membrane. It localises to the cell projection. The protein resides in the early endosome membrane. It carries out the reaction L-tyrosyl-[protein] + ATP = O-phospho-L-tyrosyl-[protein] + ADP + H(+). In terms of biological role, receptor tyrosine kinase which binds promiscuously GPI-anchored ephrin-A family ligands residing on adjacent cells, leading to contact-dependent bidirectional signaling into neighboring cells. The signaling pathway downstream of the receptor is referred to as forward signaling while the signaling pathway downstream of the ephrin ligand is referred to as reverse signaling. The GPI-anchored ephrin-A EFNA2, EFNA3, and EFNA5 are able to activate EPHA8 through phosphorylation. With EFNA5 may regulate integrin-mediated cell adhesion and migration on fibronectin substrate but also neurite outgrowth. During development of the nervous system also plays a role in axon guidance. Downstream effectors of the EPHA8 signaling pathway include FYN which promotes cell adhesion upon activation by EPHA8 and the MAP kinases in the stimulation of neurite outgrowth. This Rattus norvegicus (Rat) protein is Ephrin type-A receptor 8 (Epha8).